Here is a 134-residue protein sequence, read N- to C-terminus: ATP synthase epsilon chain, plastid (134 aa).

It belongs to the ATPase epsilon chain family. F-type ATPases have 2 components, CF(1) - the catalytic core - and CF(0) - the membrane proton channel. CF(1) has five subunits: alpha(3), beta(3), gamma(1), delta(1), epsilon(1). CF(0) has three main subunits: a, b and c.

It localises to the plastid membrane. Produces ATP from ADP in the presence of a proton gradient across the membrane. The polypeptide is ATP synthase epsilon chain, plastid (Prototheca wickerhamii).